A 168-amino-acid chain; its full sequence is MQCPACRHTDSRVLESRSSESGRSVRRRRECLSCGHRFTTYERVEFVPISVIKRNGDRESFDRSKLLRGIVRACEKTGVSAQQMDLLVDEIEGTLQQRSSRDVQSSEIGEMVLQQIGRLSEVAYIRFASVYRQFRGVRDFVETLDRLQDLSRDEVGDVPAAVTSLTSA.

Residues methionine 1–serine 21 are disordered. Residues cysteine 3–cysteine 34 fold into a zinc finger. A compositionally biased stretch (basic and acidic residues) spans arginine 7 to glutamate 20. Positions isoleucine 49–aspartate 139 constitute an ATP-cone domain.

This sequence belongs to the NrdR family. Requires Zn(2+) as cofactor.

Negatively regulates transcription of bacterial ribonucleotide reductase nrd genes and operons by binding to NrdR-boxes. This is Transcriptional repressor NrdR from Synechococcus elongatus (strain ATCC 33912 / PCC 7942 / FACHB-805) (Anacystis nidulans R2).